A 211-amino-acid chain; its full sequence is MRLTAKQVTWLKVSLHLAGLLPFLWLVWAINHGGLGADPVKDIQHFTGRTALKFLLATLLITPLARYVKQPLLIRTRRLLGLWCFAWATLHLTSYALLELGVNNLALLGKELITRPYLTLGIISWVILLALAFTSTQAMQRKLGKHWQQLHNFVYLVAILAPIHYLWSVKIISPQPLIYAGLAVLLLALRYKKLRSLFNRLRKQVHNKLSV.

5 consecutive transmembrane segments (helical) span residues L17–A37, F54–I74, L82–V102, P116–T136, and F153–S173.

This sequence belongs to the MsrQ family. Heterodimer of a catalytic subunit (MsrP) and a heme-binding subunit (MsrQ). FMN serves as cofactor. It depends on heme b as a cofactor.

It localises to the cell inner membrane. In terms of biological role, part of the MsrPQ system that repairs oxidized periplasmic proteins containing methionine sulfoxide residues (Met-O), using respiratory chain electrons. Thus protects these proteins from oxidative-stress damage caused by reactive species of oxygen and chlorine generated by the host defense mechanisms. MsrPQ is essential for the maintenance of envelope integrity under bleach stress, rescuing a wide series of structurally unrelated periplasmic proteins from methionine oxidation, including the primary periplasmic chaperone SurA and the lipoprotein Pal. MsrQ provides electrons for reduction to the reductase catalytic subunit MsrP, using the quinone pool of the respiratory chain. This Escherichia coli (strain SMS-3-5 / SECEC) protein is Protein-methionine-sulfoxide reductase heme-binding subunit MsrQ.